The following is a 202-amino-acid chain: Molybdenum cofactor guanylyltransferase (202 aa).

GTP-binding positions include L9–G11, K22, D70, and D96. D96 provides a ligand contact to Mg(2+).

The protein belongs to the MobA family. Monomer. Mg(2+) serves as cofactor.

The protein localises to the cytoplasm. The enzyme catalyses Mo-molybdopterin + GTP + H(+) = Mo-molybdopterin guanine dinucleotide + diphosphate. In terms of biological role, transfers a GMP moiety from GTP to Mo-molybdopterin (Mo-MPT) cofactor (Moco or molybdenum cofactor) to form Mo-molybdopterin guanine dinucleotide (Mo-MGD) cofactor. The sequence is that of Molybdenum cofactor guanylyltransferase from Desulfosudis oleivorans (strain DSM 6200 / JCM 39069 / Hxd3) (Desulfococcus oleovorans).